Here is a 240-residue protein sequence, read N- to C-terminus: Uridylate kinase (240 aa).

12 to 15 (KLSG) serves as a coordination point for ATP. Residues 20–25 (GDKGFG) form an involved in allosteric activation by GTP region. G54 lines the UMP pocket. 2 residues coordinate ATP: G55 and R59. UMP contacts are provided by residues D74 and 135–142 (TGSPYFST). 3 residues coordinate ATP: N163, Y169, and D172.

This sequence belongs to the UMP kinase family. As to quaternary structure, homohexamer.

It is found in the cytoplasm. The enzyme catalyses UMP + ATP = UDP + ADP. It functions in the pathway pyrimidine metabolism; CTP biosynthesis via de novo pathway; UDP from UMP (UMPK route): step 1/1. Its activity is regulated as follows. Allosterically activated by GTP. Inhibited by UTP. Catalyzes the reversible phosphorylation of UMP to UDP. This chain is Uridylate kinase, found in Limosilactobacillus reuteri (strain DSM 20016) (Lactobacillus reuteri).